Reading from the N-terminus, the 64-residue chain is Conotoxin mr5.3 (64 aa).

Residues 1–19 form the signal peptide; sequence MRCVPVFVILLLLIASVPS. Residues 20–48 constitute a propeptide that is removed on maturation; the sequence is VDAQLKTKDDMPLASSHANVKRTLQILRN. A 4-carboxyglutamate mark is found at Glu56 and Glu60.

Contains 2 disulfide bonds that can be either 'C1-C3, C2-C4' or 'C1-C4, C2-C3', since these disulfide connectivities have been observed for conotoxins with cysteine framework V (for examples, see AC P0DQQ7 and AC P81755). As to expression, expressed by the venom duct.

The protein localises to the secreted. This chain is Conotoxin mr5.3, found in Conus marmoreus (Marble cone).